A 586-amino-acid chain; its full sequence is Germ cell nuclear acidic protein (586 aa).

4 disordered regions span residues 17 to 119 (GWDR…LSSE), 176 to 202 (KAKTVKTPKSVQKTKKPAPSLCNSPVF), 217 to 266 (TWRT…SSEE), and 279 to 318 (LGGRTSASPMPSAEPKPQRPCLSTPSATGRKTGSQVPVKD). Positions 65-76 (SGKENRSQEEHI) are enriched in basic and acidic residues. Residues 94-107 (TPKSTFKQSASSAQ) show a composition bias toward polar residues. Positions 176-191 (KAKTVKTPKSVQKTKK) are enriched in basic residues. Residues 225 to 244 (PPSDEHQATSKDREETEKPR) are compositionally biased toward basic and acidic residues. Positions 299–313 (CLSTPSATGRKTGSQ) are enriched in polar residues. The SprT-like domain occupies 383 to 482 (KLYQLYNTSV…LYARKAMLAH (100 aa)).

Belongs to the serine-aspartate repeat-containing protein (SDr) family.

It localises to the nucleus. It is found in the PML body. Its subcellular location is the chromosome. Functionally, may play a role in DNA-protein cross-links (DPCs) clearance, ensuring the genomic stability by protecting germ cells and early embryos from various sources of damage. This chain is Germ cell nuclear acidic protein (gcna), found in Danio rerio (Zebrafish).